Here is a 386-residue protein sequence, read N- to C-terminus: Putative 8-amino-7-oxononanoate synthase 2 (386 aa).

Residue Arg21 participates in substrate binding. Residue 104-105 (GY) coordinates pyridoxal 5'-phosphate. Substrate is bound at residue His129. Residues Ser176, 201-204 (DDAH), and 230-233 (TLSK) contribute to the pyridoxal 5'-phosphate site. Position 233 is an N6-(pyridoxal phosphate)lysine (Lys233).

The protein belongs to the class-II pyridoxal-phosphate-dependent aminotransferase family. BioF subfamily. In terms of assembly, homodimer. Requires pyridoxal 5'-phosphate as cofactor.

The enzyme catalyses 6-carboxyhexanoyl-[ACP] + L-alanine + H(+) = (8S)-8-amino-7-oxononanoate + holo-[ACP] + CO2. It functions in the pathway cofactor biosynthesis; biotin biosynthesis. Functionally, catalyzes the decarboxylative condensation of pimeloyl-[acyl-carrier protein] and L-alanine to produce 8-amino-7-oxononanoate (AON), [acyl-carrier protein], and carbon dioxide. In Bacillus velezensis (strain DSM 23117 / BGSC 10A6 / LMG 26770 / FZB42) (Bacillus amyloliquefaciens subsp. plantarum), this protein is Putative 8-amino-7-oxononanoate synthase 2 (bioF).